The chain runs to 606 residues: Ubiquitin carboxyl-terminal hydrolase 2 (606 aa).

The segment at 1–201 (MSQLSSTLKR…RSEYLADYLE (201 aa)) is necessary for interaction with MDM4. Disordered regions lie at residues 53-112 (PSPP…GGSG) and 207-228 (ASAP…LSPT). Residues 90-100 (KRAESQTRGTE) are compositionally biased toward basic and acidic residues. In terms of domain architecture, USP spans 268-600 (AGLRNLGNTC…DAYLLFYELA (333 aa)). The active-site Nucleophile is C277. Residues 404–504 (YLEREDSRIG…FPKILVLHLK (101 aa)) form a necessary for interaction with MDM4 region. C426, C429, C477, and C480 together coordinate Zn(2+). The active-site Proton acceptor is H558.

It belongs to the peptidase C19 family. USP2 subfamily. In terms of assembly, homooligomer. Found in trimeric complex with MDM2 and MDM4 and USP2. Interacts with CCND1; the interaction is direct and promotes its stabilization by antagonizing ubiquitin-dependent degradation. Interacts (via N-terminus and C-terminus) with MDM2. Interacts with MDM4 and PER1. Interacts with KCNQ1; counteracts the NEDD4L-specific down-regulation of I(Ks) and restores plasma membrane localization of KCNQ1.

It is found in the cytoplasm. It localises to the perinuclear region. The catalysed reaction is Thiol-dependent hydrolysis of ester, thioester, amide, peptide and isopeptide bonds formed by the C-terminal Gly of ubiquitin (a 76-residue protein attached to proteins as an intracellular targeting signal).. With respect to regulation, cleavage is inhibited by ubiquitin in a dosage-dependent manner. Cleavage is blocked by ubiquitin aldehyde. Hydrolase that deubiquitinates polyubiquitinated target proteins such as MDM2, MDM4 and CCND1. Possesses both ubiquitin-specific peptidase and isopeptidase activities. Deubiquitinates MDM2 without reversing MDM2-mediated p53/TP53 ubiquitination and thus indirectly promotes p53/TP53 degradation and limits p53 activity. Has no deubiquitinase activity against p53/TP53. Prevents MDM2-mediated degradation of MDM4. Plays a role in the G1/S cell-cycle progression in normal and cancer cells. Plays a role in the regulation of myogenic differentiation of embryonic muscle cells. Regulates the circadian clock by modulating its intrinsic circadian rhythm and its capacity to respond to external cues. Associates with clock proteins and deubiquitinates core clock component PER1 but does not affect its overall stability. Regulates the nucleocytoplasmic shuttling and nuclear retention of PER1 and its repressive role on the clock transcription factors CLOCK and BMAL1. The protein is Ubiquitin carboxyl-terminal hydrolase 2 (USP2) of Bos taurus (Bovine).